Consider the following 279-residue polypeptide: Membrane protein insertase YidC (279 aa).

A signal peptide spans 1–22 (MKHLKRNMALLSVAALSFILTA). A lipid anchor (N-palmitoyl cysteine) is attached at cysteine 23. A lipid anchor (S-diacylglycerol cysteine) is attached at cysteine 23. A run of 5 helical transmembrane segments spans residues 35-55 (IWDG…SKLF), 59-79 (YGWG…PLMI), 129-149 (MAGC…YAAV), 170-190 (PYFI…WLSM), and 210-230 (PLVI…YWVV). A compositionally biased stretch (basic and acidic residues) spans 253 to 268 (EEKIQTEKAKRKAIEK). A disordered region spans residues 253 to 279 (EEKIQTEKAKRKAIEKAKRRAMKSKRK). A compositionally biased stretch (basic residues) spans 269–279 (AKRRAMKSKRK).

It belongs to the OXA1/ALB3/YidC family. Type 2 subfamily.

The protein localises to the cell membrane. In terms of biological role, required for the insertion and/or proper folding and/or complex formation of integral membrane proteins into the membrane. Involved in integration of membrane proteins that insert both dependently and independently of the Sec translocase complex, as well as at least some lipoproteins. The sequence is that of Membrane protein insertase YidC from Pediococcus pentosaceus (strain ATCC 25745 / CCUG 21536 / LMG 10740 / 183-1w).